The primary structure comprises 172 residues: Large ribosomal subunit protein uL10 (172 aa).

Belongs to the universal ribosomal protein uL10 family. Part of the ribosomal stalk of the 50S ribosomal subunit. The N-terminus interacts with L11 and the large rRNA to form the base of the stalk. The C-terminus forms an elongated spine to which L12 dimers bind in a sequential fashion forming a multimeric L10(L12)X complex.

In terms of biological role, forms part of the ribosomal stalk, playing a central role in the interaction of the ribosome with GTP-bound translation factors. This is Large ribosomal subunit protein uL10 (rplJ) from Liberibacter asiaticus (Citrus greening disease).